Consider the following 525-residue polypeptide: Golgi resident protein GCP60 (525 aa).

Ala-2 carries the post-translational modification N-acetylalanine. The disordered stretch occupies residues 12–68 (VSLDGLTLSPDSEERPGAEGAPPQTPPSSAPGNGLGSGASGQQREPGEAAAEGAAEE). Ser-13 bears the Phosphoserine mark. The residue at position 18 (Thr-18) is a Phosphothreonine. Residues Ser-20 and Ser-40 each carry the phosphoserine modification. The span at 52-64 (GQQREPGEAAAEG) shows a compositional bias: low complexity. One can recognise an ACB domain in the interval 80 to 171 (LEELYGLALR…LNKCCPLLSA (92 aa)). The stretch at 169 to 254 (LSAYVASHRI…AALNSQTAVQ (86 aa)) forms a coiled coil. Residues 180-226 (KEEEEKRRKAEEERRQREEEERERLQKEEEKRKREKEDRLRREEEER) form a disordered region. Residues 238-305 (QQKQQIMAAL…QQQAALQKQQ (68 aa)) form a q domain; Interaction with PI4KB, TBC1D22A and TBC1D22B region. The span at 319 to 336 (KVNTAGASDTLSVNGQAK) shows a compositional bias: polar residues. The interval 319-346 (KVNTAGASDTLSVNGQAKTHTENSEKVL) is disordered. Positions 337-346 (THTENSEKVL) are enriched in basic and acidic residues. The GOLD domain occupies 381 to 523 (KEKIRQDADS…SKSVYYRVYY (143 aa)). Positions 448 to 470 (SDEEEEEEENVTCEEKAKKNANK) form a coiled coil.

In terms of assembly, homodimer. Interacts with the C-terminal cytoplasmic domain of giantin/GOLGB1. Interacts with PBR and PKA regulatory subunit RI-alpha. Does not interact with PKA regulatory subunit RI-beta nor PKA regulatory subunit RII-alpha. Interacts (via Q domain) with PI4KB (via N-terminus). Interacts (via Q domain) with TBC1D22A and TBC1D22B; interactions with PI4KB and with TBC1D22A and TBC1D22B are mutually exclusive. Interacts with C10ORF76 and RAB11B. In terms of tissue distribution, expressed in brain (hippocampus, olfactory bulb, neuronal and glial cells of the cortex), eye, submaxillary gland, testis (interstitial and tubular compartments), ovary (granulosa cells, theca cells at late stages and primary follicles), adrenal gland (fasciculata and glomerulosa cells), heart, liver, and steroidogenic cell lines.

It is found in the golgi apparatus membrane. The protein resides in the mitochondrion. Functionally, involved in the maintenance of Golgi structure by interacting with giantin, affecting protein transport between the endoplasmic reticulum and Golgi. Involved in hormone-induced steroid biosynthesis in testicular Leydig cells. Recruits PI4KB to the Golgi apparatus membrane; enhances the enzyme activity of PI4KB activity via its membrane recruitment thereby increasing the local concentration of the substrate in the vicinity of the kinase. This is Golgi resident protein GCP60 (Acbd3) from Mus musculus (Mouse).